The following is a 124-amino-acid chain: UPF0231 protein Shewmr7_3366 (124 aa).

Belongs to the UPF0231 family.

This chain is UPF0231 protein Shewmr7_3366, found in Shewanella sp. (strain MR-7).